We begin with the raw amino-acid sequence, 345 residues long: Beta-2-glycoprotein 1 (345 aa).

The signal sequence occupies residues 1-19 (MVSPVLALFSAFLCHVAIA). 4 consecutive Sushi domains span residues 21 to 81 (RICP…RCVP), 82 to 139 (RVCP…ACAR), 140 to 202 (ITCP…ECLE), and 203 to 262 (VKCP…TCRE). Intrachain disulfides connect C23/C66, C51/C79, C84/C124, C110/C137, C142/C188, C174/C200, C205/C248, C234/C260, C264/C315, C300/C325, and C307/C345. The O-linked (GalNAc...) threonine glycan is linked to T33. 5 N-linked (GlcNAc...) asparagine glycosylation sites follow: N105, N117, N162, N183, and N193. Residues 263-345 (SCKLPVKKAT…KTDASELTPC (83 aa)) are sushi-like.

As to expression, expressed by the liver and secreted in plasma.

The protein localises to the secreted. Functionally, binds to various kinds of negatively charged substances such as heparin, phospholipids, and dextran sulfate. May prevent activation of the intrinsic blood coagulation cascade by binding to phospholipids on the surface of damaged cells. The chain is Beta-2-glycoprotein 1 (Apoh) from Mus musculus (Mouse).